A 216-amino-acid polypeptide reads, in one-letter code: Ras-related protein Rab-11A (216 aa).

Glycine 2 carries the post-translational modification N-acetylglycine. GTP-binding residues include serine 20, glycine 21, valine 22, glycine 23, lysine 24, serine 25, asparagine 26, asparagine 37, leucine 38, serine 40, serine 42, and threonine 43. Serine 25 is a Mg(2+) binding site. A Switch 1 motif is present at residues 36 to 47 (FNLESKSTIGVE). 2 residues coordinate Mg(2+): threonine 43 and aspartate 66. The short motif at 67–86 (TAGQERYRAITSAYYRGAVG) is the Switch 2 element. Residues glycine 69, asparagine 124, lysine 125, aspartate 127, alanine 155, and leucine 156 each contribute to the GTP site. The segment at 183 to 211 (DRRENDMSPSNNVVPIHVPPTTENKPKVQ) is disordered. 2 S-geranylgeranyl cysteine lipidation sites follow: cysteine 212 and cysteine 213. Cysteine methyl ester is present on cysteine 213. Residues 214–216 (QNI) constitute a propeptide, removed in mature form.

It belongs to the small GTPase superfamily. Rab family. Interacts (GTP-bound form) with RAB11FIPs (via their C-termini) including RAB11FIP1, RAB11FIP2, RAB11FIP3, RAB11FIP4 and RAB11FIP5 effectors. Forms a complex with RAB11FIP3 and dynein intermediate chain DYNC1LI1; the interaction between RAB11A1 and RAB11FIP3 is direct; the complex regulates endocytic trafficking. Interacts with EVI5; EVI5 and RAB11FIP3 may be mutually exclusive and compete for binding RAB11A. Interacts with SGSM1, SGSM2, SGSM3 and VIPAS39. Interacts with EXOC6 in a GTP-dependent manner. Interacts with RAB11FIP5. Interacts with STXBP6. Interacts (GDP-bound form) with ZFYVE27. Interacts with BIRC6/bruce. May interact with TBC1D14. Interacts with UNC119; in a cell cycle-dependent manner. GDP-bound and nucleotide-free forms interact with SH3BP5. Interacts (GDP-bound form) with KIF5A in a ZFYVE27-dependent manner. Interacts (GDP-bound form) with RELCH. Found in a complex composed of RELCH, OSBP1 and RAB11A. Interacts with TBC1D12. Interacts with DEF6. Interacts with ATP9A. Forms a heterotetramer with RAB11FIP3; the GTP-bound form is preferred for binding. Forms a complex with Rabin8/RAB3IP and RAB11FIP3, probably a heterohexamer with two of each protein subunit, where Rabin8/RAB3IP and RAB11FIP3 simultaneously bind to RAB11A; the complex promotes preciliary trafficking and cilia growth. Forms a complex containing RAB11A, ASAP1, Rabin8/RAB3IP, RAP11FIP3 and ARF4; the complex promotes preciliary trafficking; the complex binds to RHO in photoreceptor cells and promotes RHO ciliary transport. Interacts (GTP-bound form) with WDR44; the interaction prevents RAB11A-RAB3IP-RAB11FIP3 complex formation. Mg(2+) is required as a cofactor. Detected in various tissues, such as brain, testis, spleen, and heart.

Its subcellular location is the cell membrane. The protein localises to the endosome membrane. It is found in the recycling endosome membrane. The protein resides in the cleavage furrow. It localises to the cytoplasmic vesicle. Its subcellular location is the phagosome. The protein localises to the cytoplasmic vesicle membrane. It is found in the golgi apparatus. The protein resides in the trans-Golgi network. The catalysed reaction is GTP + H2O = GDP + phosphate + H(+). Its activity is regulated as follows. Regulated by guanine nucleotide exchange factors (GEFs) which promote the exchange of bound GDP for free GTP. Regulated by GTPase activating proteins (GAPs) which increase the GTP hydrolysis activity. Inhibited by GDP dissociation inhibitors (GDIs) which prevent Rab-GDP dissociation. In terms of biological role, the small GTPases Rab are key regulators of intracellular membrane trafficking, from the formation of transport vesicles to their fusion with membranes. Rabs cycle between an inactive GDP-bound form and an active GTP-bound form that is able to recruit to membranes different set of downstream effectors directly responsible for vesicle formation, movement, tethering and fusion. The small Rab GTPase RAB11A regulates endocytic recycling. Forms a functional Rab11/RAB11FIP3/dynein complex that regulates the movement of peripheral sorting endosomes (SE) along microtubule tracks toward the microtubule organizing center/centrosome, generating the endosomal recycling compartment (ERC). Acts as a major regulator of membrane delivery during cytokinesis. Together with MYO5B and RAB8A participates in epithelial cell polarization. Together with Rabin8/RAB3IP, RAB8A, the exocyst complex, PARD3, PRKCI, ANXA2, CDC42 and DNMBP promotes transcytosis of PODXL to the apical membrane initiation sites (AMIS), apical surface formation and lumenogenesis. Together with MYO5B participates in CFTR trafficking to the plasma membrane and TF (Transferrin) recycling in nonpolarized cells. Required in a complex with MYO5B and RAB11FIP2 for the transport of NPC1L1 to the plasma membrane. Participates in the sorting and basolateral transport of CDH1 from the Golgi apparatus to the plasma membrane. Regulates the recycling of FCGRT (receptor of Fc region of monomeric IgG) to basolateral membranes. May also play a role in melanosome transport and release from melanocytes. Promotes Rabin8/RAB3IP preciliary vesicular trafficking to mother centriole by forming a ciliary targeting complex containing Rab11, ASAP1, Rabin8/RAB3IP, RAB11FIP3 and ARF4, thereby regulating ciliogenesis initiation. On the contrary, upon LPAR1 receptor signaling pathway activation, interaction with phosphorylated WDR44 prevents Rab11-RAB3IP-RAB11FIP3 complex formation and cilia growth. Participates in the export of a subset of neosynthesized proteins through a Rab8-Rab10-Rab11-endososomal dependent export route via interaction with WDR44. In Rattus norvegicus (Rat), this protein is Ras-related protein Rab-11A.